A 122-amino-acid chain; its full sequence is MIQSFTRLNVADNTGAKEIMCIKVLGGSKRRYATVGDVIVASVKKALPTGKIKKGQVVKAVVVRTHKEVQRENGSLIRFDDNAAVILDAKREPVGTRIFGPVAREVRYSGFMKIVSLAPEVL.

It belongs to the universal ribosomal protein uL14 family. As to quaternary structure, part of the 50S ribosomal subunit. Forms a cluster with proteins L3 and L19. In the 70S ribosome, L14 and L19 interact and together make contacts with the 16S rRNA in bridges B5 and B8.

Binds to 23S rRNA. Forms part of two intersubunit bridges in the 70S ribosome. The chain is Large ribosomal subunit protein uL14 from Aliarcobacter butzleri (strain RM4018) (Arcobacter butzleri).